The chain runs to 1755 residues: Transposon Ty1-PL Gag-Pol polyprotein (1755 aa).

3 stretches are compositionally biased toward polar residues: residues 1–23 (MESQ…SVTS), 48–60 (TKAN…TPAS), and 127–152 (QSQF…GNTF). Disordered regions lie at residues 1–93 (MESQ…MMTQ), 126–174 (PQSQ…PPPM), and 352–421 (GSRN…SKST). Over residues 153 to 165 (TDSSSADSDMTST) the composition is skewed to low complexity. The RNA-binding stretch occupies residues 299-401 (NNGIHINNKV…NSKSKTARAH (103 aa)). Residues 402–418 (NVSTSNNSPSTDNDSIS) are compositionally biased toward low complexity. Position 416 is a phosphoserine (S416). D461 (for protease activity; shared with dimeric partner) is an active-site residue. Residues 583–640 (NVHTSESTRKYPYPFIHRMLAHANAQTIRYSLKNNTITYFNESDVDWSSAIDYQCPDC) form an integrase-type zinc finger-like region. The 176-residue stretch at 660 to 835 (NSYEPFQYLH…AGLDISTLLP (176 aa)) folds into the Integrase catalytic domain. D671 and D736 together coordinate Mg(2+). Disordered stretches follow at residues 956 to 1087 (SKAV…ETEK), 1092 to 1111 (RSPS…NIVP), and 1130 to 1187 (DLPL…DNET). The segment covering 960-969 (SPTDSTPPST) has biased composition (low complexity). Polar residues predominate over residues 1005–1015 (STPQISNIEST). The segment covering 1038–1053 (ESSHASKSKDFRHSDS) has biased composition (basic and acidic residues). Polar residues-rich tracts occupy residues 1054 to 1082 (YSEN…QISD) and 1101 to 1111 (PENNSSHNIVP). Positions 1178–1212 (KKRSLEDNETEIKVSRDTWNTKNMRSLEPPRSKKR) match the Bipartite nuclear localization signal motif. Positions 1338–1476 (NNYYITQLDI…DILGLEIKYQ (139 aa)) constitute a Reverse transcriptase Ty1/copia-type domain. Mg(2+)-binding residues include D1346, D1427, D1428, D1610, E1652, and D1685. The region spanning 1610 to 1752 (DASYGNQPYY…IKTFKLLTNK (143 aa)) is the RNase H Ty1/copia-type domain.

In terms of assembly, the capsid protein forms a homotrimer, from which the VLPs are assembled. The protease is a homodimer, whose active site consists of two apposed aspartic acid residues. Initially, virus-like particles (VLPs) are composed of the structural unprocessed proteins Gag and Gag-Pol, and also contain the host initiator methionine tRNA (tRNA(i)-Met) which serves as a primer for minus-strand DNA synthesis, and a dimer of genomic Ty RNA. Processing of the polyproteins occurs within the particle and proceeds by an ordered pathway, called maturation. First, the protease (PR) is released by autocatalytic cleavage of the Gag-Pol polyprotein yielding capsid protein p45 and a Pol-p154 precursor protein. This cleavage is a prerequisite for subsequent processing of Pol-p154 at the remaining sites to release the mature structural and catalytic proteins. Maturation takes place prior to the RT reaction and is required to produce transposition-competent VLPs.

Its subcellular location is the cytoplasm. It localises to the nucleus. It carries out the reaction DNA(n) + a 2'-deoxyribonucleoside 5'-triphosphate = DNA(n+1) + diphosphate. It catalyses the reaction Endonucleolytic cleavage to 5'-phosphomonoester.. Its function is as follows. Capsid protein (CA) is the structural component of the virus-like particle (VLP), forming the shell that encapsulates the retrotransposons dimeric RNA genome. The particles are assembled from trimer-clustered units and there are holes in the capsid shells that allow for the diffusion of macromolecules. CA also has nucleocapsid-like chaperone activity, promoting primer tRNA(i)-Met annealing to the multipartite primer-binding site (PBS), dimerization of Ty1 RNA and initiation of reverse transcription. Functionally, the aspartyl protease (PR) mediates the proteolytic cleavages of the Gag and Gag-Pol polyproteins after assembly of the VLP. Reverse transcriptase/ribonuclease H (RT) is a multifunctional enzyme that catalyzes the conversion of the retro-elements RNA genome into dsDNA within the VLP. The enzyme displays a DNA polymerase activity that can copy either DNA or RNA templates, and a ribonuclease H (RNase H) activity that cleaves the RNA strand of RNA-DNA heteroduplexes during plus-strand synthesis and hydrolyzes RNA primers. The conversion leads to a linear dsDNA copy of the retrotransposon that includes long terminal repeats (LTRs) at both ends. In terms of biological role, integrase (IN) targets the VLP to the nucleus, where a subparticle preintegration complex (PIC) containing at least integrase and the newly synthesized dsDNA copy of the retrotransposon must transit the nuclear membrane. Once in the nucleus, integrase performs the integration of the dsDNA into the host genome. This Saccharomyces cerevisiae (strain ATCC 204508 / S288c) (Baker's yeast) protein is Transposon Ty1-PL Gag-Pol polyprotein (TY1B-PL).